The primary structure comprises 428 residues: Glutamyl-tRNA reductase (428 aa).

Substrate contacts are provided by residues 49-52 (TCNR), S109, 114-116 (EGQ), and Q120. The active-site Nucleophile is C50. Residue 189–194 (GAGKMA) coordinates NADP(+).

The protein belongs to the glutamyl-tRNA reductase family. Homodimer.

It carries out the reaction (S)-4-amino-5-oxopentanoate + tRNA(Glu) + NADP(+) = L-glutamyl-tRNA(Glu) + NADPH + H(+). It functions in the pathway porphyrin-containing compound metabolism; protoporphyrin-IX biosynthesis; 5-aminolevulinate from L-glutamyl-tRNA(Glu): step 1/2. It participates in porphyrin-containing compound metabolism; chlorophyll biosynthesis. In terms of biological role, catalyzes the NADPH-dependent reduction of glutamyl-tRNA(Glu) to glutamate 1-semialdehyde (GSA). The chain is Glutamyl-tRNA reductase from Rippkaea orientalis (strain PCC 8801 / RF-1) (Cyanothece sp. (strain PCC 8801)).